The sequence spans 386 residues: MNIHEYQAKEILRSYGVSVPNGRVAFTVDEAVEAAKELGAPVCVVKAQIHAGGRGKAGGVKVAKSLEEVRTYASELLGKVLVTHQTGPEGKEVKRLLIEEGCDIQKEYYIGLVVDRATSRVVLMGSEEGGTEIEEVAAKTPEKIFKEYIDPAVGLQAFQARRLAFNINIPKHLVNQAVKFMMGLYQVFVDKDCSIAEINPLVVTGDGKVMALDAKLNFDSNALYRHPDILEYRDLDEEDPKEVEASKYDLNYIALDGNIGCMVNGAGLAMATMDIIKYYGGEPANFLDVGGGASEEKVREAFKIILSDPNVKGIFVNIFGGIMKCDVIASGIVAATKQVGLTLPLVVRLEGTNVELGKKILQESGLNIIAAESMADGAQKIVELVR.

An ATP-grasp domain is found at 9–244 (KEILRSYGVS…LDEEDPKEVE (236 aa)). ATP is bound by residues Lys-46, 53-55 (GRG), Glu-99, Cys-102, and Glu-107. Residues Asn-199 and Asp-213 each contribute to the Mg(2+) site. Substrate contacts are provided by residues Asn-264 and 321-323 (GIM).

This sequence belongs to the succinate/malate CoA ligase beta subunit family. Heterotetramer of two alpha and two beta subunits. Mg(2+) serves as cofactor.

It catalyses the reaction succinate + ATP + CoA = succinyl-CoA + ADP + phosphate. It carries out the reaction GTP + succinate + CoA = succinyl-CoA + GDP + phosphate. Its pathway is carbohydrate metabolism; tricarboxylic acid cycle; succinate from succinyl-CoA (ligase route): step 1/1. In terms of biological role, succinyl-CoA synthetase functions in the citric acid cycle (TCA), coupling the hydrolysis of succinyl-CoA to the synthesis of either ATP or GTP and thus represents the only step of substrate-level phosphorylation in the TCA. The beta subunit provides nucleotide specificity of the enzyme and binds the substrate succinate, while the binding sites for coenzyme A and phosphate are found in the alpha subunit. This chain is Succinate--CoA ligase [ADP-forming] subunit beta, found in Geobacillus kaustophilus (strain HTA426).